The following is a 199-amino-acid chain: NADH-quinone oxidoreductase subunit C (199 aa).

It belongs to the complex I 30 kDa subunit family. As to quaternary structure, NDH-1 is composed of 14 different subunits. Subunits NuoB, C, D, E, F, and G constitute the peripheral sector of the complex.

Its subcellular location is the cell inner membrane. The enzyme catalyses a quinone + NADH + 5 H(+)(in) = a quinol + NAD(+) + 4 H(+)(out). In terms of biological role, NDH-1 shuttles electrons from NADH, via FMN and iron-sulfur (Fe-S) centers, to quinones in the respiratory chain. The immediate electron acceptor for the enzyme in this species is believed to be ubiquinone. Couples the redox reaction to proton translocation (for every two electrons transferred, four hydrogen ions are translocated across the cytoplasmic membrane), and thus conserves the redox energy in a proton gradient. The chain is NADH-quinone oxidoreductase subunit C from Polynucleobacter necessarius subsp. necessarius (strain STIR1).